Reading from the N-terminus, the 307-residue chain is Elongation factor Ts (307 aa).

Residues 80–83 (TDFV) form an involved in Mg(2+) ion dislocation from EF-Tu region.

This sequence belongs to the EF-Ts family.

The protein localises to the cytoplasm. Its function is as follows. Associates with the EF-Tu.GDP complex and induces the exchange of GDP to GTP. It remains bound to the aminoacyl-tRNA.EF-Tu.GTP complex up to the GTP hydrolysis stage on the ribosome. This Rhodopseudomonas palustris (strain BisA53) protein is Elongation factor Ts.